The following is a 130-amino-acid chain: Small ribosomal subunit protein uS11c (130 aa).

Belongs to the universal ribosomal protein uS11 family. In terms of assembly, part of the 30S ribosomal subunit.

The protein localises to the plastid. Its subcellular location is the chloroplast. In Drimys granadensis, this protein is Small ribosomal subunit protein uS11c.